We begin with the raw amino-acid sequence, 228 residues long: Cytochrome c biogenesis ATP-binding export protein CcmA (228 aa).

Positions 2–227 (LSIERLGVGR…LHLERSGAWL (226 aa)) constitute an ABC transporter domain. 34-41 (GANGSGKT) is an ATP binding site. The segment at 106–126 (GAPDGTSSVPASGRSGVAAPP) is disordered.

This sequence belongs to the ABC transporter superfamily. CcmA exporter (TC 3.A.1.107) family. As to quaternary structure, the complex is composed of two ATP-binding proteins (CcmA) and two transmembrane proteins (CcmB).

The protein localises to the cell inner membrane. The catalysed reaction is heme b(in) + ATP + H2O = heme b(out) + ADP + phosphate + H(+). Functionally, part of the ABC transporter complex CcmAB involved in the biogenesis of c-type cytochromes; once thought to export heme, this seems not to be the case, but its exact role is uncertain. Responsible for energy coupling to the transport system. The polypeptide is Cytochrome c biogenesis ATP-binding export protein CcmA (Paraburkholderia xenovorans (strain LB400)).